Here is a 209-residue protein sequence, read N- to C-terminus: Probable E3 ubiquitin-protein ligase NleG7 (209 aa).

The protein belongs to the NleG E3 ligase family. Two sizes of protein are detected in situ; only the smaller protein is secreted.

It is found in the secreted. Its subcellular location is the host cytoplasm. The catalysed reaction is S-ubiquitinyl-[E2 ubiquitin-conjugating enzyme]-L-cysteine + [acceptor protein]-L-lysine = [E2 ubiquitin-conjugating enzyme]-L-cysteine + N(6)-ubiquitinyl-[acceptor protein]-L-lysine.. Functionally, effector proteins function to alter host cell physiology and promote bacterial survival in host tissues. This protein is probably an E3 ubiquitin-protein ligase that interferes with the host's ubiquitination pathway and targets host proteins for proteasomal degradation. Mice infected with a strain of bacteria deleted for this gene were colonized less quickly by bacteria. The sequence is that of Probable E3 ubiquitin-protein ligase NleG7 from Citrobacter rodentium.